The chain runs to 273 residues: NH(3)-dependent NAD(+) synthetase (273 aa).

Gly47–Ser54 contacts ATP. Asp53 contacts Mg(2+). Arg139 lines the deamido-NAD(+) pocket. Thr159 contacts ATP. Residue Glu164 participates in Mg(2+) binding. The deamido-NAD(+) site is built by Lys172 and Asp179. The ATP site is built by Lys188 and Thr210. Position 259–260 (His259–Lys260) interacts with deamido-NAD(+).

It belongs to the NAD synthetase family. In terms of assembly, homodimer.

The catalysed reaction is deamido-NAD(+) + NH4(+) + ATP = AMP + diphosphate + NAD(+) + H(+). The protein operates within cofactor biosynthesis; NAD(+) biosynthesis; NAD(+) from deamido-NAD(+) (ammonia route): step 1/1. Its function is as follows. Catalyzes the ATP-dependent amidation of deamido-NAD to form NAD. Uses ammonia as a nitrogen source. This chain is NH(3)-dependent NAD(+) synthetase, found in Staphylococcus aureus (strain COL).